A 271-amino-acid chain; its full sequence is Formamidopyrimidine-DNA glycosylase (271 aa).

The active-site Schiff-base intermediate with DNA is P2. The Proton donor role is filled by E3. The Proton donor; for beta-elimination activity role is filled by K57. Residues H90, R109, and K151 each coordinate DNA. An FPG-type zinc finger spans residues 236–270 (HVYGRGGETCTQCGNLLSEIRLGQRTTVFCSICQP). R260 serves as the catalytic Proton donor; for delta-elimination activity.

This sequence belongs to the FPG family. As to quaternary structure, monomer. The cofactor is Zn(2+).

It carries out the reaction Hydrolysis of DNA containing ring-opened 7-methylguanine residues, releasing 2,6-diamino-4-hydroxy-5-(N-methyl)formamidopyrimidine.. It catalyses the reaction 2'-deoxyribonucleotide-(2'-deoxyribose 5'-phosphate)-2'-deoxyribonucleotide-DNA = a 3'-end 2'-deoxyribonucleotide-(2,3-dehydro-2,3-deoxyribose 5'-phosphate)-DNA + a 5'-end 5'-phospho-2'-deoxyribonucleoside-DNA + H(+). Involved in base excision repair of DNA damaged by oxidation or by mutagenic agents. Acts as a DNA glycosylase that recognizes and removes damaged bases. Has a preference for oxidized purines, such as 7,8-dihydro-8-oxoguanine (8-oxoG). Has AP (apurinic/apyrimidinic) lyase activity and introduces nicks in the DNA strand. Cleaves the DNA backbone by beta-delta elimination to generate a single-strand break at the site of the removed base with both 3'- and 5'-phosphates. This is Formamidopyrimidine-DNA glycosylase from Shewanella oneidensis (strain ATCC 700550 / JCM 31522 / CIP 106686 / LMG 19005 / NCIMB 14063 / MR-1).